Here is a 935-residue protein sequence, read N- to C-terminus: Progesterone receptor (935 aa).

The tract at residues methionine 1–alanine 50 is disordered. Positions methionine 1 to leucine 164 are AF3; mediates transcriptional activation. The tract at residues methionine 1–isoleucine 568 is modulating, Pro-Rich. Serine 20 carries the post-translational modification Phosphoserine. Positions leucine 55–leucine 59 match the LXXL motif 1 motif. The interval arginine 62–arginine 159 is disordered. The residue at position 81 (serine 81) is a Phosphoserine. The LXXL motif 2 motif lies at leucine 115–tryptophan 119. A phosphoserine mark is found at serine 130 and serine 162. Residues methionine 165–histidine 305 form a mediates transcriptional transrepression region. The Nuclear localization signal motif lies at lysine 183 to arginine 187. A disordered region spans residues leucine 185–glycine 252. At serine 190 the chain carries Phosphoserine. Residues proline 191–proline 203 are compositionally biased toward polar residues. At serine 213 the chain carries Phosphoserine. The segment covering glutamate 220–aspartate 231 has biased composition (acidic residues). Positions serine 232–glycine 246 are enriched in low complexity. Phosphoserine; by MAPK1 is present on serine 294. The interval glycine 331–proline 365 is disordered. Residues alanine 335 to glycine 356 show a composition bias toward low complexity. The residue at position 345 (serine 345) is a Phosphoserine; by MAPK. A Glycyl lysine isopeptide (Lys-Gly) (interchain with G-Cter in SUMO); alternate cross-link involves residue lysine 388. A Glycyl lysine isopeptide (Lys-Gly) (interchain with G-Cter in ubiquitin); alternate cross-link involves residue lysine 388. At serine 400 the chain carries Phosphoserine; by CDK2. The tract at residues proline 415 to serine 452 is disordered. The segment covering proline 418–proline 434 has biased composition (pro residues). Positions glycine 435–serine 452 are enriched in low complexity. Residues serine 456–arginine 548 are AF1; mediates transcriptional activation. Lysine 533 participates in a covalent cross-link: Glycyl lysine isopeptide (Lys-Gly) (interchain with G-Cter in SUMO). 2 NR C4-type zinc fingers span residues cysteine 569–cysteine 589 and cysteine 605–cysteine 629. Positions cysteine 569 to phenylalanine 641 form a DNA-binding region, nuclear receptor. Position 678 is a phosphoserine (serine 678). The NR LBD domain occupies glutamine 681–isoleucine 915. Residues leucine 689–lysine 935 are AF2; mediates transcriptional activation.

The protein belongs to the nuclear hormone receptor family. In terms of assembly, interacts with SMARD1 and UNC45A. Interacts with CUEDC2; the interaction promotes ubiquitination, decreases sumoylation, and represses transcriptional activity. Interacts with PIAS3; the interaction promotes sumoylation of PR in a hormone-dependent manner, inhibits DNA-binding, and alters nuclear export. Interacts with SP1; the interaction requires ligand-induced phosphorylation on Ser-344 by ERK1/2-MAPK. Interacts with PRMT2. Interacts with NCOA2 and NCOA1. Interacts with KLF9. Interacts with GTF2B. In terms of processing, phosphorylated on multiple serine sites. Several of these sites are hormone-dependent. Phosphorylation on Ser-294 is highly hormone-dependent and modulates ubiquitination and sumoylation on Lys-388. Phosphorylation on Ser-345 requires induction by hormone. Basal phosphorylation on Ser-81, Ser-162, Ser-190 and Ser-400 is increased in response to progesterone and can be phosphorylated in vitro by the CDK2-A1 complex. Increased levels of phosphorylation on Ser-400 also in the presence of EGF, heregulin, IGF, PMA and FBS. Phosphorylation at this site by CDK2 is ligand-independent, and increases nuclear translocation and transcriptional activity. Phosphorylation at Ser-162 and Ser-294, but not at Ser-190, is impaired during the G(2)/M phase of the cell cycle. Phosphorylation on Ser-345 by ERK1/2 MAPK is required for interaction with SP1. Post-translationally, sumoylation is hormone-dependent and represses transcriptional activity. Sumoylation on all three sites is enhanced by PIAS3. Desumoylated by SENP1. Sumoylation on Lys-388, the main site of sumoylation, is repressed by ubiquitination on the same site, and modulated by phosphorylation at Ser-294. Ubiquitination is hormone-dependent and represses sumoylation on the same site. Promoted by MAPK-mediated phosphorylation on Ser-294. In terms of processing, palmitoylated by ZDHHC7 and ZDHHC21. Palmitoylation is required for plasma membrane targeting and for rapid intracellular signaling via ERK and AKT kinases and cAMP generation.

The protein resides in the nucleus. Its subcellular location is the cytoplasm. Its function is as follows. The steroid hormones and their receptors are involved in the regulation of eukaryotic gene expression and affect cellular proliferation and differentiation in target tissues. Transcriptional activator of several progesteron-dependent promoters in a variety of cell types. Involved in activation of SRC-dependent MAPK signaling on hormone stimulation. The polypeptide is Progesterone receptor (PGR) (Pithecia irrorata (Gray monk saki)).